We begin with the raw amino-acid sequence, 694 residues long: Probable methyltransferase PMT11 (694 aa).

Residues 1–14 (MKPLTNGDLFKSPT) lie on the Cytoplasmic side of the membrane. A helical; Signal-anchor for type II membrane protein membrane pass occupies residues 15-32 (LIKISALVFVTVAFFYLG). Residues 33-694 (KHWSDDGYQQ…LTCEKRLLRA (662 aa)) lie on the Lumenal side of the membrane. N-linked (GlcNAc...) asparagine glycosylation is found at Asn69 and Asn77. The tract at residues 83-128 (IPATIRQQPPSVVADTEKVKVEANPPPPPPPSPSPPPPPGPVKSFG) is disordered. Residues 106–123 (NPPPPPPPSPSPPPPPGP) show a composition bias toward pro residues. Asn155, Asn378, and Asn423 each carry an N-linked (GlcNAc...) asparagine glycan.

Belongs to the methyltransferase superfamily.

It is found in the golgi apparatus membrane. The sequence is that of Probable methyltransferase PMT11 from Arabidopsis thaliana (Mouse-ear cress).